We begin with the raw amino-acid sequence, 447 residues long: Tubulin beta chain (447 aa).

GTP contacts are provided by Q11, E69, S138, G142, T143, G144, N204, and N226. E69 is a binding site for Mg(2+). The tract at residues 425–447 (YQDASISEGEEEYEEEVPIEGEE) is disordered. The segment covering 432–447 (EGEEEYEEEVPIEGEE) has biased composition (acidic residues).

The protein belongs to the tubulin family. In terms of assembly, dimer of alpha and beta chains. A typical microtubule is a hollow water-filled tube with an outer diameter of 25 nm and an inner diameter of 15 nM. Alpha-beta heterodimers associate head-to-tail to form protofilaments running lengthwise along the microtubule wall with the beta-tubulin subunit facing the microtubule plus end conferring a structural polarity. Microtubules usually have 13 protofilaments but different protofilament numbers can be found in some organisms and specialized cells. Mg(2+) serves as cofactor.

It localises to the cytoplasm. Its subcellular location is the cytoskeleton. Functionally, tubulin is the major constituent of microtubules, a cylinder consisting of laterally associated linear protofilaments composed of alpha- and beta-tubulin heterodimers. Microtubules grow by the addition of GTP-tubulin dimers to the microtubule end, where a stabilizing cap forms. Below the cap, tubulin dimers are in GDP-bound state, owing to GTPase activity of alpha-tubulin. The polypeptide is Tubulin beta chain (tubA) (Botryotinia fuckeliana (Noble rot fungus)).